A 156-amino-acid polypeptide reads, in one-letter code: Large ribosomal subunit protein uL15 (156 aa).

Residues 1–13 (MKLNEIKDNEGAT) show a composition bias toward basic and acidic residues. A disordered region spans residues 1 to 41 (MKLNEIKDNEGATKNRKRLGRGIGSGSGKTAGRGVKGQKAR). Residues 21-35 (RGIGSGSGKTAGRGV) are compositionally biased toward gly residues.

This sequence belongs to the universal ribosomal protein uL15 family. Part of the 50S ribosomal subunit.

In terms of biological role, binds to the 23S rRNA. The chain is Large ribosomal subunit protein uL15 from Sinorhizobium medicae (strain WSM419) (Ensifer medicae).